Consider the following 208-residue polypeptide: ATP-dependent dethiobiotin synthetase BioD (208 aa).

11 to 16 (EVGKTF) contacts ATP. A Mg(2+)-binding site is contributed by Thr15. Lys31 is a catalytic residue. Ser35 lines the substrate pocket. ATP contacts are provided by residues Asp42, 95-98 (ETSG), and 155-156 (NQ). Mg(2+)-binding residues include Asp42 and Glu95.

The protein belongs to the dethiobiotin synthetase family. In terms of assembly, homodimer. The cofactor is Mg(2+).

It localises to the cytoplasm. The enzyme catalyses (7R,8S)-7,8-diammoniononanoate + CO2 + ATP = (4R,5S)-dethiobiotin + ADP + phosphate + 3 H(+). The protein operates within cofactor biosynthesis; biotin biosynthesis; biotin from 7,8-diaminononanoate: step 1/2. In terms of biological role, catalyzes a mechanistically unusual reaction, the ATP-dependent insertion of CO2 between the N7 and N8 nitrogen atoms of 7,8-diaminopelargonic acid (DAPA, also called 7,8-diammoniononanoate) to form a ureido ring. This Chlamydia felis (strain Fe/C-56) (Chlamydophila felis) protein is ATP-dependent dethiobiotin synthetase BioD.